Reading from the N-terminus, the 520-residue chain is MEVLESGEQGVLQWDRKLSELSEPGDGEALMYHTHFSELLDEFSQNVLGQLLNDPFLSEKSVSTEVEPSPMSPAPLIQAEHSYSLCEEPRAQSPFTHITTSDSFNDDEVESEKWYLSTDFPSTTIKTEPITDEPPPGLVPSVTLTITAISTPFEKEEPPLEMNTGVDSSCQTIIPKIKLEPHEVDQFLNFSPKEAPVDHLHLPPTPPSSHGSDSEGSLSPNPRLHPFSLPQTHSPSRAAPRAPSALSSSPLLTAPHKLQGSGPLVLTEEEKRTLIAEGYPIPTKLPLTKSEEKALKKIRRKIKNKISAQESRRKKKEYMDSLEKKVESCSTENLELRKKVEVLENTNRTLLQQLQKLQTLVMGKVSRTCKLAGTQTGTCLMVVVLCFAVAFGSFFQGYGPYPSATKMALPSQHSLQEPYTASVVRSRNLLIYEEHSPPEEPSSPGSAGELGGWDRGSSLLRVSGLESRPDVDLPHFIISNETSLEKSVLLELQQHLVSAKLEGNETLKVVELDRRVNTTF.

The Cytoplasmic segment spans residues 1–378 (MEVLESGEQG…CKLAGTQTGT (378 aa)). At serine 93 the chain carries Phosphoserine. Lysine 178 participates in a covalent cross-link: Glycyl lysine isopeptide (Lys-Gly) (interchain with G-Cter in SUMO2). Position 191 is a phosphoserine (serine 191). Positions 195-264 (APVDHLHLPP…PHKLQGSGPL (70 aa)) are disordered. Low complexity-rich tracts occupy residues 208 to 220 (SSHG…SLSP) and 234 to 255 (SPSR…LTAP). In terms of domain architecture, bZIP spans 294–357 (ALKKIRRKIK…RTLLQQLQKL (64 aa)). The interval 296–325 (KKIRRKIKNKISAQESRRKKKEYMDSLEKK) is basic motif. The leucine-zipper stretch occupies residues 336–357 (LRKKVEVLENTNRTLLQQLQKL). A helical; Signal-anchor for type II membrane protein transmembrane segment spans residues 379 to 399 (CLMVVVLCFAVAFGSFFQGYG). The Lumenal portion of the chain corresponds to 400-520 (PYPSATKMAL…ELDRRVNTTF (121 aa)). The S1P recognition signature appears at 427–430 (RNLL). N-linked (GlcNAc...) asparagine glycans are attached at residues asparagine 480, asparagine 504, and asparagine 517.

The protein belongs to the bZIP family. ATF subfamily. In terms of assembly, binds DNA as a dimer. In terms of processing, upon ER stress, translocated to the Golgi apparatus, where it is processed by regulated intramembrane proteolysis (RIP) to release the cytosol-facing N-terminal transcription factor domain. The cleavage is performed sequentially by site-1 and site-2 proteases (S1P/MBTPS1 and S2P/MBTPS2). N-glycosylated. Post-translationally, ubiquitinated by HRD1/SYVN1; undergoes 'Lys-48'-linked ubiquitination, followed by rapid proteasomal degradation under normal conditions. Upon ER stress, SYVN1 E3 ubiquitin-protein ligase dissociates from its substrate, ubiquitination does not occur and CREB3L2 is stabilized.

Its subcellular location is the endoplasmic reticulum membrane. The protein localises to the nucleus. In terms of biological role, transcription factor involved in unfolded protein response (UPR). In the absence of endoplasmic reticulum (ER) stress, inserted into ER membranes, with N-terminal DNA-binding and transcription activation domains oriented toward the cytosolic face of the membrane. In response to ER stress, transported to the Golgi, where it is cleaved in a site-specific manner by resident proteases S1P/MBTPS1 and S2P/MBTPS2. The released N-terminal cytosolic domain is translocated to the nucleus to effect transcription of specific target genes. Plays a critical role in chondrogenesis by activating the transcription of SEC23A, which promotes the transport and secretion of cartilage matrix proteins, and possibly that of ER biogenesis-related genes. In a neuroblastoma cell line, protects cells from ER stress-induced death. In vitro activates transcription of target genes via direct binding to the CRE site. This is Cyclic AMP-responsive element-binding protein 3-like protein 2 (CREB3L2) from Pongo abelii (Sumatran orangutan).